The sequence spans 142 residues: uncharacterized protein (142 aa).

Residues 1–138 (MLEKLAEAHP…SFMILVKPLA (138 aa)) form the N-acetyltransferase domain.

This is an uncharacterized protein from Bacillus subtilis (strain 168).